The following is a 782-amino-acid chain: Lysosome membrane protein 2-C (782 aa).

Residues 1–7 are Cytoplasmic-facing; the sequence is MVANNKG. A helical membrane pass occupies residues 8–28; the sequence is LLIAGLLLSVIGAALFVISLA. Topologically, residues 29–739 are lumenal; it reads LLPSVLNVAT…QQFKQIQTVK (711 aa). Residues N77, N105, N191, N219, N234, N243, N281, N368, N387, N401, N427, N432, N451, N465, N501, N536, N540, N595, N605, N613, N646, and N692 are each glycosylated (N-linked (GlcNAc...) asparagine). Residues 740–760 form a helical membrane-spanning segment; sequence IAPVVVVSIFGGILLIAGLVM. Topologically, residues 761–782 are cytoplasmic; that stretch reads AINGFRKTFYNNNQYNGYNIIN. Residues 777–781 carry the Tyrosine-type lysosomal sorting signal motif; it reads GYNII.

The protein belongs to the CD36 family. Post-translationally, heavily glycosylated.

The protein resides in the lysosome membrane. Its function is as follows. May act as a lysosomal receptor. May be involved role in macropinocytosis and fluid phase exocytosis. The polypeptide is Lysosome membrane protein 2-C (lmpC) (Dictyostelium discoideum (Social amoeba)).